The following is a 571-amino-acid chain: Proline--tRNA ligase (571 aa).

The protein belongs to the class-II aminoacyl-tRNA synthetase family. ProS type 1 subfamily. As to quaternary structure, homodimer.

It is found in the cytoplasm. The enzyme catalyses tRNA(Pro) + L-proline + ATP = L-prolyl-tRNA(Pro) + AMP + diphosphate. In terms of biological role, catalyzes the attachment of proline to tRNA(Pro) in a two-step reaction: proline is first activated by ATP to form Pro-AMP and then transferred to the acceptor end of tRNA(Pro). As ProRS can inadvertently accommodate and process non-cognate amino acids such as alanine and cysteine, to avoid such errors it has two additional distinct editing activities against alanine. One activity is designated as 'pretransfer' editing and involves the tRNA(Pro)-independent hydrolysis of activated Ala-AMP. The other activity is designated 'posttransfer' editing and involves deacylation of mischarged Ala-tRNA(Pro). The misacylated Cys-tRNA(Pro) is not edited by ProRS. The chain is Proline--tRNA ligase from Mannheimia succiniciproducens (strain KCTC 0769BP / MBEL55E).